The primary structure comprises 871 residues: Translation initiation factor IF-2 (871 aa).

Disordered stretches follow at residues 60–101 and 184–203; these read KKNI…QEVK and ESLK…KKES. A compositionally biased stretch (basic residues) spans 61–72; the sequence is KNIKTPTAKKPK. A compositionally biased stretch (basic and acidic residues) spans 73–101; sequence KENIKEQEKLNESEKKEPKKEEKLKQEVK. In terms of domain architecture, tr-type G spans 370–537; it reads TRAPVITIMG…IVLLQADILE (168 aa). A G1 region spans residues 379–386; sequence GHVDHGKT. 379-386 contributes to the GTP binding site; the sequence is GHVDHGKT. The tract at residues 404 to 408 is G2; that stretch reads GITQH. The G3 stretch occupies residues 425 to 428; it reads DTPG. GTP is bound by residues 425–429 and 479–482; these read DTPGH and NKMD. The segment at 479–482 is G4; sequence NKMD. The interval 515-517 is G5; that stretch reads SAK.

This sequence belongs to the TRAFAC class translation factor GTPase superfamily. Classic translation factor GTPase family. IF-2 subfamily.

It is found in the cytoplasm. One of the essential components for the initiation of protein synthesis. Protects formylmethionyl-tRNA from spontaneous hydrolysis and promotes its binding to the 30S ribosomal subunits. Also involved in the hydrolysis of GTP during the formation of the 70S ribosomal complex. The polypeptide is Translation initiation factor IF-2 (Campylobacter jejuni (strain RM1221)).